A 202-amino-acid polypeptide reads, in one-letter code: Small ribosomal subunit protein uS4c (202 aa).

The S4 RNA-binding domain occupies 90–152; sequence MRLDNVIFRL…RKSESIINKN (63 aa).

The protein belongs to the universal ribosomal protein uS4 family. As to quaternary structure, part of the 30S ribosomal subunit. Contacts protein S5. The interaction surface between S4 and S5 is involved in control of translational fidelity.

The protein resides in the plastid. The protein localises to the chloroplast. Its function is as follows. One of the primary rRNA binding proteins, it binds directly to 16S rRNA where it nucleates assembly of the body of the 30S subunit. With S5 and S12 plays an important role in translational accuracy. In Dendrohypopterygium filiculiforme (Moss), this protein is Small ribosomal subunit protein uS4c (rps4).